Consider the following 366-residue polypeptide: MISSLHRPTVARVDLEAIQANIDKIQRHLPKKVKTYAVVKANAYGHGAVAVSKAVEDQVDGYCVSNLDEALELRQAGIDKEILILGVILASELQLAIKHQLTITVASLEWLELAKKESVDFSQLHVHVKVDSGMGRIGVRSLAEANQLISILSDMGVQLDGIFTHFATADESDHAMFDKQLTFFKQLVEQLDKRPALVHASNSATSLWHSETIFSAIRLGIVIYGLNPSGNSLSLPCPLKEALSLESRLVHVKQIQAGDSVGYGASYVAAEPEYVGTLPIGYADGWTRNMQGFKVLVEGEFCDIIGRVSMDQLTIRLTKAYPIGTKVTLIGQQGKQVITATDVADYRGTINYEVLCLLSDRIPREY.

The active-site Proton acceptor; specific for D-alanine is the lysine 40. Residue lysine 40 is modified to N6-(pyridoxal phosphate)lysine. Arginine 136 serves as a coordination point for substrate. Tyrosine 263 functions as the Proton acceptor; specific for L-alanine in the catalytic mechanism. Substrate is bound at residue methionine 310.

This sequence belongs to the alanine racemase family. Pyridoxal 5'-phosphate is required as a cofactor.

The catalysed reaction is L-alanine = D-alanine. The protein operates within amino-acid biosynthesis; D-alanine biosynthesis; D-alanine from L-alanine: step 1/1. Its function is as follows. Catalyzes the interconversion of L-alanine and D-alanine. May also act on other amino acids. The protein is Alanine racemase (alr) of Streptococcus equi subsp. zooepidemicus (strain H70).